The following is a 298-amino-acid chain: Putative glycylpeptide N-tetradecanoyltransferase (298 aa).

It belongs to the NMT family.

It carries out the reaction N-terminal glycyl-[protein] + tetradecanoyl-CoA = N-tetradecanoylglycyl-[protein] + CoA + H(+). In terms of biological role, adds a myristoyl group to the N-terminal glycine residue of certain proteins. The protein is Putative glycylpeptide N-tetradecanoyltransferase of Melanoplus sanguinipes (Migratory grasshopper).